Here is a 162-residue protein sequence, read N- to C-terminus: MVAISEIKSTVDVTAANCLMLLSRVGQENVDGGDQKRVFTCKTCLKQFHSFQALGGHRASHKKPNNDALSSGLMKKVKTSSHPCPICGVEFPMGQALGGHMRRHRNESGAAGGALVTRALLPEPTVTTLKKSSSGKRVACLDLSLGMVDNLNLKLELGRTVY.

2 consecutive C2H2-type zinc fingers follow at residues 39–61 (FTCKTCLKQFHSFQALGGHRASH) and 82–104 (HPCPICGVEFPMGQALGGHMRRH).

In terms of tissue distribution, expressed in roots, stems and flowers.

Its subcellular location is the nucleus. In terms of biological role, transcriptional repressor involved in light acclimation, cold and oxidative stress responses. May regulate a collection of transcripts involved in response to high-light, cold and oxidative stress. This Arabidopsis thaliana (Mouse-ear cress) protein is Zinc finger protein ZAT12 (ZAT12).